The primary structure comprises 1088 residues: RNA-directed RNA polymerase (1088 aa).

Residues 501–687 (LSYGDVTRFL…AKRYIAGGKI (187 aa)) form the RdRp catalytic domain.

Belongs to the reoviridae RNA-directed RNA polymerase family. As to quaternary structure, interacts with VP3 (Potential). Interacts with VP2; this interaction activates VP1. Interacts with NSP5; this interaction is probably necessary for the formation of functional virus factories. Interacts with NSP2; this interaction is weak. It depends on Mg(2+) as a cofactor.

The protein resides in the virion. It carries out the reaction RNA(n) + a ribonucleoside 5'-triphosphate = RNA(n+1) + diphosphate. Functionally, RNA-directed RNA polymerase that is involved in both transcription and genome replication. Together with VP3 capping enzyme, forms an enzyme complex positioned near the channels situated at each of the five-fold vertices of the core. Following infection, the outermost layer of the virus is lost, leaving a double-layered particle (DLP) made up of the core and VP6 shell. VP1 then catalyzes the transcription of fully conservative plus-strand genomic RNAs that are extruded through the DLP's channels into the cytoplasm where they function as mRNAs for translation of viral proteins. One copy of each of the viral (+)RNAs is also recruited during core assembly, together with newly synthesized polymerase complexes and VP2. The polymerase of these novo-formed particles catalyzes the synthesis of complementary minus-strands leading to dsRNA formation. To do so, the polymerase specifically recognizes and binds 4 bases 5'-UGUG-3' in the conserved 3'-sequence of plus-strand RNA templates. VP2 presumably activates the autoinhibited VP1-RNA complex to coordinate packaging and genome replication. Once dsRNA synthesis is complete, the polymerase switches to the transcriptional mode, thus providing secondary transcription. This chain is RNA-directed RNA polymerase, found in Rotavirus A (strain RVA/SA11-Patton/G3P[X]) (RV-A).